The chain runs to 260 residues: tRNA pseudouridine synthase A (260 aa).

The active-site Nucleophile is Asp-52. Tyr-110 contributes to the substrate binding site.

Belongs to the tRNA pseudouridine synthase TruA family. Homodimer.

It catalyses the reaction uridine(38/39/40) in tRNA = pseudouridine(38/39/40) in tRNA. Formation of pseudouridine at positions 38, 39 and 40 in the anticodon stem and loop of transfer RNAs. The sequence is that of tRNA pseudouridine synthase A from Thiobacillus denitrificans (strain ATCC 25259 / T1).